We begin with the raw amino-acid sequence, 487 residues long: N-succinylglutamate 5-semialdehyde dehydrogenase (487 aa).

221–226 contributes to the NAD(+) binding site; it reads GSSRTG. Residues Glu244 and Cys278 contribute to the active site.

The protein belongs to the aldehyde dehydrogenase family. AstD subfamily.

It carries out the reaction N-succinyl-L-glutamate 5-semialdehyde + NAD(+) + H2O = N-succinyl-L-glutamate + NADH + 2 H(+). The protein operates within amino-acid degradation; L-arginine degradation via AST pathway; L-glutamate and succinate from L-arginine: step 4/5. In terms of biological role, catalyzes the NAD-dependent reduction of succinylglutamate semialdehyde into succinylglutamate. This is N-succinylglutamate 5-semialdehyde dehydrogenase from Pseudomonas putida (strain ATCC 700007 / DSM 6899 / JCM 31910 / BCRC 17059 / LMG 24140 / F1).